A 919-amino-acid polypeptide reads, in one-letter code: MKFAYRFSNLLGTVYRCGNLNFTHDGNSVISPVGNRVTVFDLKNNRSNTLPLATKYNIKCVGLSPDGRLAIIVDEGGAALLVSLVCRSVLHHFHFKGSVHSVSFSPDGRKFVVTKGNIAQMYHAPGKKREFNAFVLDKTYFGPYDETTCIDWTDDSKCFVVGSKDMSTWVFGAERWDNLIYYALSGHKDAIVACFFESNSLDLYSLSQDGALCVWQCDTPPEGLRLKAPRGWKADILQREKEEEEEDEEEGDRETTIRGKTTPAEQERVGKVKYSRLAKYFLNKEGDFNNLTSAAYHKKTHLLVTGFASGIFHLHELPEFNLIHSLSISDQRVASVAINSSGDWIAFGCSGMGQLLVWEWQSESYVLKQQGHFNSMVALAYSPDGQYIVTGGDDGKVKVWNTLSGFCFVTLTEHSSGVTGVTFTTTGHVIVTSSLDGTVRAFDLHRYRNFRTFTSPRPTQFSCVAVDSSGEIVSAGAQDSFEIFVWSMQTGRLLDVLSGHEGPVSGLCFNPMKSILASASWDKTVRLWDMFDSWRTKETLTLTSDALAVTFRPDGAELAVATLNSQITFWDPENAVQVGSIEGRHDLKTGRKELDKITAKHSAKGKAFTTLCYSADGQSILAGGMSKFVCLYHVREQILVKRFELSCNLSLDAMEEFLNRRKMTEFGNLALIDQDAGEENGVAVPLPGVRKGDMSSRHFKPEIRVTSLRFSPTGRCWAATSTEGLLIFSLDAQMLFDPFELDTSVTPGRIREALRQREFTRAILMAFRLNEKKLAQEALEAVPQNEIEVVSTSLPELYVVKVLEFLAASFEESRHLEFYLIWTQKLLMSHGQRLKSRAGQLLPVVQFLQKGLQRHLDDVSKLCDWNRFNIQYVLAVSKQRGMKRTLEPVDTEEDSDASDEDSLHLLRAAGEEEEEEMLI.

WD repeat units lie at residues 12–50, 53–93, 94–132, 142–181, and 186–225; these read GTVY…SNTL, ATKY…LHHF, HFKG…REFN, GPYD…NLIY, and GHKD…EGLR. N6-acetyllysine is present on Lys-55. Residues 238–266 are disordered; it reads QREKEEEEEDEEEGDRETTIRGKTTPAEQ. Residues 242–252 show a composition bias toward acidic residues; that stretch reads EEEEEDEEEGD. WD repeat units follow at residues 286–325, 328–368, 371–410, 413–452, 456–498, 499–538, 541–580, 603–642, and 700–740; these read GDFN…LIHS, ISDQ…YVLK, GHFN…CFVT, EHSS…NFRT, PRPT…DVLS, GHEG…RTKE, TLTS…QVGS, AKGK…LVKR, and KPEI…DPFE. A disordered region spans residues 885–919; it reads TLEPVDTEEDSDASDEDSLHLLRAAGEEEEEEMLI. Residues 889–900 are compositionally biased toward acidic residues; that stretch reads VDTEEDSDASDE. Residue Thr-891 is modified to Phosphothreonine. 3 positions are modified to phosphoserine: Ser-895, Ser-898, and Ser-902.

It belongs to the WD repeat PWP2 family. As to quaternary structure, part of the small subunit (SSU) processome, composed of more than 70 proteins and the RNA chaperone small nucleolar RNA (snoRNA) U3.

It is found in the nucleus. Its subcellular location is the nucleolus. In terms of biological role, part of the small subunit (SSU) processome, first precursor of the small eukaryotic ribosomal subunit. During the assembly of the SSU processome in the nucleolus, many ribosome biogenesis factors, an RNA chaperone and ribosomal proteins associate with the nascent pre-rRNA and work in concert to generate RNA folding, modifications, rearrangements and cleavage as well as targeted degradation of pre-ribosomal RNA by the RNA exosome. The chain is Periodic tryptophan protein 2 homolog (Pwp2) from Mus musculus (Mouse).